A 314-amino-acid polypeptide reads, in one-letter code: Olfactory receptor 5P68 (314 aa).

The Extracellular segment spans residues 1 to 28 (MAFLHNGNHTAVTEFILLGLTDDPVFRV). The N-linked (GlcNAc...) asparagine glycan is linked to Asn8. Residues 29–49 (ILFTIILCIYLVTVSGNLSTI) form a helical membrane-spanning segment. The Cytoplasmic segment spans residues 50–57 (LLIRVSSQ). The chain crosses the membrane as a helical span at residues 58 to 78 (LHHPMYFFLSHLASVDIGYSS). The Extracellular portion of the chain corresponds to 79–102 (SVTPNMLANFLVEKNTISYLGCTI). An intrachain disulfide couples Cys100 to Cys192. The chain crosses the membrane as a helical span at residues 103 to 123 (QLSLAAFCGTVECFLLATMAY). The Cytoplasmic portion of the chain corresponds to 124–136 (DRFMAICSPLLYS). A helical transmembrane segment spans residues 137–157 (TKMSTQVCIQLIVGSYIGGFL). The Extracellular portion of the chain corresponds to 158 to 199 (NASSFTLFFLSFLFCGPNRINHFYCDFAPLVALSCSDVSVSE). A helical transmembrane segment spans residues 200–220 (VVTSFFSGSVTMITMLVIAIS). Topologically, residues 221–240 (YTYILITILKMRSTEGRHKA) are cytoplasmic. The chain crosses the membrane as a helical span at residues 241–261 (FSTCTSHLTAVTLFYGTITFI). Over 262–274 (YVMPKSSFSTDQN) the chain is Extracellular. The chain crosses the membrane as a helical span at residues 275-295 (KVVSVFYMVVIPMLNPLIYSL). Residues 296 to 314 (RNNEIKDALKRHLGKKIFS) are Cytoplasmic-facing.

Belongs to the G-protein coupled receptor 1 family.

It is found in the cell membrane. Potential odorant receptor. The protein is Olfactory receptor 5P68 of Mus musculus (Mouse).